A 152-amino-acid chain; its full sequence is MIALIQRVKRADVRVGDRTTGEIGAGLLALVCAERGDNEAAADKLLAKLLGYRVFSDAAGKMNLPVSNIDGAGGAGGLLLVSQFTLAADTNSGLRPSFTPAAPPDEGARLFDYFVAAARERHPVVETGEFGADMQVSLVNDGPVTFWLQVRP.

The Gly-cisPro motif, important for rejection of L-amino acids motif lies at 142–143 (GP).

Belongs to the DTD family. In terms of assembly, homodimer.

The protein localises to the cytoplasm. It catalyses the reaction glycyl-tRNA(Ala) + H2O = tRNA(Ala) + glycine + H(+). It carries out the reaction a D-aminoacyl-tRNA + H2O = a tRNA + a D-alpha-amino acid + H(+). In terms of biological role, an aminoacyl-tRNA editing enzyme that deacylates mischarged D-aminoacyl-tRNAs. Also deacylates mischarged glycyl-tRNA(Ala), protecting cells against glycine mischarging by AlaRS. Acts via tRNA-based rather than protein-based catalysis; rejects L-amino acids rather than detecting D-amino acids in the active site. By recycling D-aminoacyl-tRNA to D-amino acids and free tRNA molecules, this enzyme counteracts the toxicity associated with the formation of D-aminoacyl-tRNA entities in vivo and helps enforce protein L-homochirality. This chain is D-aminoacyl-tRNA deacylase, found in Burkholderia ambifaria (strain ATCC BAA-244 / DSM 16087 / CCUG 44356 / LMG 19182 / AMMD) (Burkholderia cepacia (strain AMMD)).